Consider the following 142-residue polypeptide: Transcriptional regulator MraZ (142 aa).

SpoVT-AbrB domains are found at residues 5 to 47 and 76 to 119; these read NYQH…TNQE and SLTV…DINA.

It belongs to the MraZ family. Forms oligomers.

The protein localises to the cytoplasm. The protein resides in the nucleoid. This chain is Transcriptional regulator MraZ, found in Mycoplasmoides gallisepticum (strain R(low / passage 15 / clone 2)) (Mycoplasma gallisepticum).